The primary structure comprises 156 residues: Gene 55 protein (156 aa).

The segment at 132-156 is disordered; sequence KRRWSGGNASSHEERMRGPFTEVAE.

The protein is Gene 55 protein (55) of Mycobacterium phage L5 (Mycobacteriophage L5).